The sequence spans 473 residues: Pre-mRNA-splicing factor PRP46 (473 aa).

The span at 1–14 (MSTSLETPSGTSAG) shows a compositional bias: polar residues. Disordered stretches follow at residues 1–21 (MSTS…VASG) and 103–126 (GPNV…QAVA). WD repeat units lie at residues 180–219 (GHMG…LKLS), 222–261 (GHIS…VIRH), 264–303 (GHFS…NIFT), 306–347 (GHTS…NTLT), 349–388 (HKKS…FVNN), 391–429 (GHEA…PFQH), and 440–473 (DAEA…SEQA).

This sequence belongs to the WD repeat PRL1/PRL2 family. In terms of assembly, associated with the spliceosome.

The protein resides in the cytoplasm. Its subcellular location is the nucleus. Functionally, involved in pre-mRNA splicing and required for cell cycle progression at G2/M. In Cryptococcus neoformans var. neoformans serotype D (strain B-3501A) (Filobasidiella neoformans), this protein is Pre-mRNA-splicing factor PRP46 (PRP46).